The chain runs to 454 residues: Metalloprotease MTH_856 (454 aa).

The segment at glutamine 92–proline 115 is disordered.

Belongs to the peptidase U62 family.

Functionally, probable metalloprotease. The sequence is that of Metalloprotease MTH_856 from Methanothermobacter thermautotrophicus (strain ATCC 29096 / DSM 1053 / JCM 10044 / NBRC 100330 / Delta H) (Methanobacterium thermoautotrophicum).